The following is a 728-amino-acid chain: Glutamate--cysteine ligase (728 aa).

The segment at 517–552 is disordered; sequence PVRTTRRGGSASRSASGTSTPNSGSSRPATPPLGPV. Low complexity predominate over residues 523 to 536; that stretch reads RGGSASRSASGTST.

Belongs to the glutamate--cysteine ligase type 3 family.

It carries out the reaction L-cysteine + L-glutamate + ATP = gamma-L-glutamyl-L-cysteine + ADP + phosphate + H(+). The protein operates within sulfur metabolism; glutathione biosynthesis; glutathione from L-cysteine and L-glutamate: step 1/2. The sequence is that of Glutamate--cysteine ligase (gcs-1) from Neurospora crassa (strain ATCC 24698 / 74-OR23-1A / CBS 708.71 / DSM 1257 / FGSC 987).